The sequence spans 192 residues: Probable GTP-binding protein EngB (192 aa).

The EngB-type G domain occupies 22-192 (GRPEIVFVGR…LLASIDTFTQ (171 aa)). Residues 30–37 (GRSNVGKS), 57–61 (GKTRL), 75–78 (DLPG), 142–145 (TKWD), and 172–174 (YSS) each bind GTP. S37 and T59 together coordinate Mg(2+).

Belongs to the TRAFAC class TrmE-Era-EngA-EngB-Septin-like GTPase superfamily. EngB GTPase family. Mg(2+) serves as cofactor.

Functionally, necessary for normal cell division and for the maintenance of normal septation. This Chlorobaculum tepidum (strain ATCC 49652 / DSM 12025 / NBRC 103806 / TLS) (Chlorobium tepidum) protein is Probable GTP-binding protein EngB.